A 230-amino-acid chain; its full sequence is Ureidoacrylate amidohydrolase RutB (230 aa).

Catalysis depends on aspartate 24, which acts as the Proton acceptor. Lysine 133 is a catalytic residue. Cysteine 166 serves as the catalytic Nucleophile.

Belongs to the isochorismatase family. RutB subfamily.

The catalysed reaction is (Z)-3-ureidoacrylate + H2O + H(+) = (Z)-3-aminoacrylate + NH4(+) + CO2. It catalyses the reaction (Z)-3-ureidoacrylate + H2O = (Z)-3-aminoacrylate + carbamate + H(+). It carries out the reaction (Z)-2-methylureidoacrylate + H2O + H(+) = (Z)-2-methylaminoacrylate + NH4(+) + CO2. Functionally, hydrolyzes ureidoacrylate to form aminoacrylate and carbamate. The carbamate hydrolyzes spontaneously, thereby releasing one of the nitrogen atoms of the pyrimidine ring as ammonia and one of its carbon atoms as CO2. This is Ureidoacrylate amidohydrolase RutB from Escherichia coli O157:H7.